The sequence spans 228 residues: 2-C-methyl-D-erythritol 4-phosphate cytidylyltransferase (228 aa).

The protein belongs to the IspD/TarI cytidylyltransferase family. IspD subfamily.

It carries out the reaction 2-C-methyl-D-erythritol 4-phosphate + CTP + H(+) = 4-CDP-2-C-methyl-D-erythritol + diphosphate. It participates in isoprenoid biosynthesis; isopentenyl diphosphate biosynthesis via DXP pathway; isopentenyl diphosphate from 1-deoxy-D-xylulose 5-phosphate: step 2/6. Its function is as follows. Catalyzes the formation of 4-diphosphocytidyl-2-C-methyl-D-erythritol from CTP and 2-C-methyl-D-erythritol 4-phosphate (MEP). The protein is 2-C-methyl-D-erythritol 4-phosphate cytidylyltransferase of Geobacillus kaustophilus (strain HTA426).